Reading from the N-terminus, the 448-residue chain is Bifunctional protein GlmU (448 aa).

Residues 1–232 form a pyrophosphorylase region; the sequence is MSDRSLLVVV…ADEVAGVNSR (232 aa). Residues 11–14, Lys25, Gln78, and 83–84 contribute to the UDP-N-acetyl-alpha-D-glucosamine site; these read LAAG and GT. Asp108 contributes to the Mg(2+) binding site. UDP-N-acetyl-alpha-D-glucosamine contacts are provided by Gly144, Glu158, Asn173, and Asn230. Mg(2+) is bound at residue Asn230. Residues 233-253 are linker; it reads VQLAEAEAILQRRLRLAAMAG. The N-acetyltransferase stretch occupies residues 254–448; the sequence is GATLVAPETV…FRAARSKPKG (195 aa). Positions 319 and 337 each coordinate UDP-N-acetyl-alpha-D-glucosamine. The Proton acceptor role is filled by His349. 2 residues coordinate UDP-N-acetyl-alpha-D-glucosamine: Tyr352 and Asn363. Acetyl-CoA is bound by residues Ala366, 372–373, Thr409, and Arg426; that span reads NY.

In the N-terminal section; belongs to the N-acetylglucosamine-1-phosphate uridyltransferase family. The protein in the C-terminal section; belongs to the transferase hexapeptide repeat family. Homotrimer. The cofactor is Mg(2+).

The protein localises to the cytoplasm. The enzyme catalyses alpha-D-glucosamine 1-phosphate + acetyl-CoA = N-acetyl-alpha-D-glucosamine 1-phosphate + CoA + H(+). The catalysed reaction is N-acetyl-alpha-D-glucosamine 1-phosphate + UTP + H(+) = UDP-N-acetyl-alpha-D-glucosamine + diphosphate. It functions in the pathway nucleotide-sugar biosynthesis; UDP-N-acetyl-alpha-D-glucosamine biosynthesis; N-acetyl-alpha-D-glucosamine 1-phosphate from alpha-D-glucosamine 6-phosphate (route II): step 2/2. It participates in nucleotide-sugar biosynthesis; UDP-N-acetyl-alpha-D-glucosamine biosynthesis; UDP-N-acetyl-alpha-D-glucosamine from N-acetyl-alpha-D-glucosamine 1-phosphate: step 1/1. Its pathway is bacterial outer membrane biogenesis; LPS lipid A biosynthesis. Catalyzes the last two sequential reactions in the de novo biosynthetic pathway for UDP-N-acetylglucosamine (UDP-GlcNAc). The C-terminal domain catalyzes the transfer of acetyl group from acetyl coenzyme A to glucosamine-1-phosphate (GlcN-1-P) to produce N-acetylglucosamine-1-phosphate (GlcNAc-1-P), which is converted into UDP-GlcNAc by the transfer of uridine 5-monophosphate (from uridine 5-triphosphate), a reaction catalyzed by the N-terminal domain. The polypeptide is Bifunctional protein GlmU (Xanthobacter autotrophicus (strain ATCC BAA-1158 / Py2)).